A 54-amino-acid chain; its full sequence is Protein P32 (54 aa).

The helical transmembrane segment at 4 to 24 (FGKTLITIVTAIIGVAIIAVI) threads the bilayer.

Its subcellular location is the virion membrane. Its function is as follows. Component of the phage injection machinery. Required for DNA injection in the membrane transformation event. Involved in the formation of the membrane tail tube to connect the virus interior with the host cytosol. Essential for viral infectivity. This chain is Protein P32 (XXXII), found in Enterobacteria phage PRD1 (Bacteriophage PRD1).